Here is a 131-residue protein sequence, read N- to C-terminus: Probable calcium-binding protein CML34 (131 aa).

4 EF-hand domains span residues 1–33, 34–69, 70–97, and 98–131; these read MSAK…FSPY, FTQE…MLKE, VFVF…LGKK, and FTEE…IGDI. Ca(2+) is bound by residues Asp-11, Asn-13, Asp-15, Lys-17, Glu-22, Asp-47, Asp-49, Asn-51, Glu-53, and Glu-58. The Ca(2+) site is built by Asp-111, Asp-113, Asp-115, Tyr-117, and Glu-122.

Its function is as follows. Potential calcium sensor. The protein is Probable calcium-binding protein CML34 (CML34) of Arabidopsis thaliana (Mouse-ear cress).